The chain runs to 251 residues: 2-amino-5-chloromuconate deaminase (251 aa).

Monomer.

The enzyme catalyses (2Z,4E)-2-aminomuconate + H2O = (2Z,4E)-2-hydroxyhexa-2,4-dienedioate + NH4(+). Its pathway is xenobiotic degradation; 4-chloronitrobenzene degradation. It participates in xenobiotic degradation; nitrobenzene degradation. With respect to regulation, cysteine residue modifying agents such as p-chloromercuribenzoate and the SH-binding metals Zn(2+), Ni(2+) and Cu(2+) completely inhibit deaminase activity, whereas Ca(2+), Mg(2+) and the histidine residue-modifying agent diethyl pyrocarbonate inhibit the activity by 23 to 50%. Functionally, involved in the biodegradation of xenobiotic compounds, such as nitrobenzene and 4-chloronitrobenzene (4-CNB). CnbZ preferentially catalyzes the deamination of 2-amino-5-chloromuconate (2A5CM) to yield 2-hydroxy-5-chloromuconate (2H5CM). Also able to catalyze the deamination of 2-aminomuconate to yield 2-hydroxymuconate, which spontaneously converts into its keto form, 2-oxalocrotonate. The protein is 2-amino-5-chloromuconate deaminase of Comamonas testosteroni (Pseudomonas testosteroni).